A 188-amino-acid chain; its full sequence is Molybdopterin synthase catalytic subunit (188 aa).

Residues 1-14 are compositionally biased toward low complexity; sequence MATQPPQDQTSTTP. The tract at residues 1 to 23 is disordered; sequence MATQPPQDQTSTTPSLPPHLDPT. Substrate is bound by residues 134-135, lysine 150, and 157-159; these read HR and KRE.

The protein belongs to the MoaE family. MOCS2B subfamily. In terms of assembly, heterotetramer; composed of 2 small (MOCS2A) and 2 large (MOCS2B) subunits.

It is found in the cytoplasm. The enzyme catalyses 2 [molybdopterin-synthase sulfur-carrier protein]-C-terminal-Gly-aminoethanethioate + cyclic pyranopterin phosphate + H2O = molybdopterin + 2 [molybdopterin-synthase sulfur-carrier protein]-C-terminal Gly-Gly + 2 H(+). The protein operates within cofactor biosynthesis; molybdopterin biosynthesis. Functionally, catalytic subunit of the molybdopterin synthase complex, a complex that catalyzes the conversion of precursor Z into molybdopterin. Acts by mediating the incorporation of 2 sulfur atoms from thiocarboxylated MOCS2A into precursor Z to generate a dithiolene group. In Aspergillus fumigatus (strain ATCC MYA-4609 / CBS 101355 / FGSC A1100 / Af293) (Neosartorya fumigata), this protein is Molybdopterin synthase catalytic subunit.